Here is a 217-residue protein sequence, read N- to C-terminus: Thiopurine S-methyltransferase (217 aa).

The S-adenosyl-L-methionine site is built by tryptophan 10, leucine 45, glutamate 66, and arginine 123.

The protein belongs to the class I-like SAM-binding methyltransferase superfamily. TPMT family.

The protein localises to the cytoplasm. The catalysed reaction is S-adenosyl-L-methionine + a thiopurine = S-adenosyl-L-homocysteine + a thiopurine S-methylether.. The polypeptide is Thiopurine S-methyltransferase (Pseudomonas fluorescens (strain Pf0-1)).